We begin with the raw amino-acid sequence, 286 residues long: Pantothenate synthetase (286 aa).

Residue 30 to 37 participates in ATP binding; the sequence is MGNLHRGH. The active-site Proton donor is His37. Residue Gln61 coordinates (R)-pantoate. Gln61 serves as a coordination point for beta-alanine. 149–152 contacts ATP; it reads GEKD. (R)-pantoate is bound at residue Gln155. Residues Val178 and 186 to 189 contribute to the ATP site; that span reads LSSR.

It belongs to the pantothenate synthetase family. Homodimer.

It localises to the cytoplasm. It catalyses the reaction (R)-pantoate + beta-alanine + ATP = (R)-pantothenate + AMP + diphosphate + H(+). Its pathway is cofactor biosynthesis; (R)-pantothenate biosynthesis; (R)-pantothenate from (R)-pantoate and beta-alanine: step 1/1. In terms of biological role, catalyzes the condensation of pantoate with beta-alanine in an ATP-dependent reaction via a pantoyl-adenylate intermediate. In Nitrosococcus oceani (strain ATCC 19707 / BCRC 17464 / JCM 30415 / NCIMB 11848 / C-107), this protein is Pantothenate synthetase.